A 430-amino-acid chain; its full sequence is tRNA(Ile)-lysidine synthase (430 aa).

Ser-24–Ser-29 contacts ATP.

It belongs to the tRNA(Ile)-lysidine synthase family.

The protein localises to the cytoplasm. The enzyme catalyses cytidine(34) in tRNA(Ile2) + L-lysine + ATP = lysidine(34) in tRNA(Ile2) + AMP + diphosphate + H(+). Functionally, ligates lysine onto the cytidine present at position 34 of the AUA codon-specific tRNA(Ile) that contains the anticodon CAU, in an ATP-dependent manner. Cytidine is converted to lysidine, thus changing the amino acid specificity of the tRNA from methionine to isoleucine. The chain is tRNA(Ile)-lysidine synthase from Haemophilus influenzae (strain ATCC 51907 / DSM 11121 / KW20 / Rd).